The chain runs to 1493 residues: MAAAAGDRASSSGFPGAAAASPEAGGGGGALQGSGAPAAGAGLLRETGSAGRERADWRRQQLRKVRSVELDQLPEQPLFLTASPPCPSTSPSPEPADAAAGASGFQPAAGPPPPGAASRCGSHSAELAAARDSGARSPAGAEPPSAAAPSGREMENKETLKGLHKMDDRPEERMIREKLKATCMPAWKHEWLERRNRRGPVVVKPIPIKGDGSEMSNLAAELQGEGQAGSAAPAPKGRRSPSPGSSPSGRSGKPESPGVRRKRVSPVPFQSGRITPPRRAPSPDGFSPYSPEETSRRVNKVMRARLYLLQQIGPNSFLIGGDSPDNKYRVFIGPQNCSCGRGTFCIHLLFVMLRVFQLEPSDPMLWRKTLKNFEVESLFQKYHSRRSSRIKAPSRNTIQKFVSRMSNCHTLSSSSTSTSSSENSIKDEEEQMCPICLLGMLDEESLTVCEDGCRNKLHHHCMSIWAEECRRNREPLICPLCRSKWRSHDFYSHELSSPVDSPTSLRGVQQPSSPQQPVAGSQRRNQESNFNLTHYGTQQIPPAYKDLAEPWIQAFGMELVGCLFSRNWNVREMALRRLSHDVSGALLLANGESTGTSGGGSGGSLSAGAASGSSQPSISGDVVEAFCSVLSIVCADPVYKVYVAALKTLRAMLVYTPCHSLAERIKLQRLLRPVVDTILVKCADANSRTSQLSISTLLELCKGQAGELAVGREILKAGSIGVGGVDYVLSCILGNQAESNNWQELLGRLCLIDRLLLEISAEFYPHIVSTDVSQAEPVEIRYKKLLSLLAFALQSIDNSHSMVGKLSRRIYLSSARMVTTVPPLFSKLVTMLSASGSSHFARMRRRLMAIADEVEIAEVIQLGSEDTLDGQQDSSQALAPPRYPESSSLEHTAHVEKTGKGLKATRLSASSEDISDRLAGVSVGLPSSATTEQPKPTVQTKGRPHSQCLNSSPLSPPQLMFPAISAPCSSAPSVPAGSVTDASKHRPRAFVPCKIPSASPQTQRKFSLQFQRTCSENRDSEKLSPVFTQSRPPPSSNIHRAKASRPVPGSTSKLGDASKNSMTLDLNSASQCDDSFGSGSNSGSAVIPSEETAFTPAEDKCRLDVNPELNSSIEDLLEASMPSSDTTVTFKSEVAVLSPEKAESDDTYKDDVNHNQKCKEKMEAEEEEALAIAMAMSASQDALPIVPQLQVENGEDIIIIQQDTPETLPGHTKANEPYREDTEWLKGQQIGLGAFSSCYQAQDVGTGTLMAVKQVTYVRNTSSEQEEVVEALREEIRMMSHLNHPNIIRMLGATCEKSNYNLFIEWMAGASVAHLLSKYGAFKESVVINYTEQLLRGLSYLHENQIIHRDVKGANLLIDSTGQRLRIADFGAAARLASKGTGAGEFQGQLLGTIAFMAPEVLRGQQYGRSCDVWSVGCAIIEMACAKPPWNAEKHSNHLALIFKIASATTAPSIPSHLSPGLRDVALRCLELQPQDRPPSRELLKHPVFRTTW.

Low complexity-rich tracts occupy residues 1 to 23 (MAAA…ASPE) and 33 to 42 (GSGAPAAGAG). Disordered stretches follow at residues 1–171 (MAAA…DRPE) and 222–295 (LQGE…EETS). Alanine 2 carries the post-translational modification N-acetylalanine. Residue serine 21 is modified to Phosphoserine. The segment covering 84–94 (PPCPSTSPSPE) has biased composition (pro residues). Low complexity-rich tracts occupy residues 95-108 (PADA…FQPA) and 135-151 (ARSP…APSG). Serine 137 is subject to Phosphoserine. Basic and acidic residues predominate over residues 152–171 (REMENKETLKGLHKMDDRPE). Residues 230-257 (SAAPAPKGRRSPSPGSSPSGRSGKPESP) are compositionally biased toward low complexity. Serine 265 is modified (phosphoserine). Threonine 275 is modified (phosphothreonine). Residues serine 282, serine 287, and serine 290 each carry the phosphoserine modification. The SWIM-type zinc finger occupies 328-356 (YRVFIGPQNCSCGRGTFCIHLLFVMLRVF). Residues 433-482 (CPICLLGMLDEESLTVCEDGCRNKLHHHCMSIWAEECRRNREPLICPLCR) form an RING-type zinc finger. The segment covering 496 to 506 (SSPVDSPTSLR) has biased composition (polar residues). Disordered regions lie at residues 496–524 (SSPV…SQRR), 866–910 (DTLD…LSAS), 923–955 (VGLP…SPLS), and 992–1060 (PCKI…ASKN). 3 positions are modified to phosphoserine: serine 497, serine 521, and serine 910. Positions 507–522 (GVQQPSSPQQPVAGSQ) are enriched in low complexity. Composition is skewed to polar residues over residues 925-940 (LPSS…TVQT) and 998-1014 (ASPQ…QRTC). Serine 999 and serine 1024 each carry phosphoserine. The segment covering 1049–1060 (GSTSKLGDASKN) has biased composition (polar residues). In terms of domain architecture, Protein kinase spans 1224-1489 (WLKGQQIGLG…SRELLKHPVF (266 aa)). Residues 1230–1238 (IGLGAFSSC) and lysine 1253 contribute to the ATP site. Aspartate 1350 serves as the catalytic Proton acceptor. 2 positions are modified to phosphothreonine; by autocatalysis: threonine 1381 and threonine 1393.

It belongs to the protein kinase superfamily. STE Ser/Thr protein kinase family. MAP kinase kinase kinase subfamily. In terms of assembly, binds both upstream activators and downstream substrates in multimolecular complexes through its N-terminus. Oligomerizes after binding MAP4K2 or TRAF2. Interacts (via the kinase catalytic domain) with STK38. Interacts with GRIPAP1. Mg(2+) is required as a cofactor. Post-translationally, autophosphorylated. Most highly expressed in spleen, kidney and lung.

It is found in the membrane. The catalysed reaction is L-seryl-[protein] + ATP = O-phospho-L-seryl-[protein] + ADP + H(+). It catalyses the reaction L-threonyl-[protein] + ATP = O-phospho-L-threonyl-[protein] + ADP + H(+). Its activity is regulated as follows. Activated by autophosphorylation on Thr-1381 and Thr-1393 following oligomerization. Functionally, component of a protein kinase signal transduction cascade. Activates the ERK and JNK kinase pathways by phosphorylation of MAP2K1 and MAP2K4. May phosphorylate the MAPK8/JNK1 kinase. Activates CHUK and IKBKB, the central protein kinases of the NF-kappa-B pathway. In Rattus norvegicus (Rat), this protein is Mitogen-activated protein kinase kinase kinase 1 (Map3k1).